A 536-amino-acid chain; its full sequence is Membrane protein insertase YidC (536 aa).

Transmembrane regions (helical) follow at residues 3 to 23 (LQRNFFILIFFFISFLLWKTW), 346 to 366 (ICGNWGVSIILITFIIKGITF), 417 to 437 (GGCFPLFIQMPIFLALYYMLI), 454 to 474 (LSDQDPFYVLPILMGVTMFFI), and 494 to 514 (IPILFTVFFLWFPSGLVLYYL).

The protein belongs to the OXA1/ALB3/YidC family. Type 1 subfamily. In terms of assembly, interacts with the Sec translocase complex via SecD. Specifically interacts with transmembrane segments of nascent integral membrane proteins during membrane integration.

The protein localises to the cell membrane. Required for the insertion and/or proper folding and/or complex formation of integral membrane proteins into the membrane. Involved in integration of membrane proteins that insert both dependently and independently of the Sec translocase complex, as well as at least some lipoproteins. Aids folding of multispanning membrane proteins. This Buchnera aphidicola subsp. Baizongia pistaciae (strain Bp) protein is Membrane protein insertase YidC.